Here is a 91-residue protein sequence, read N- to C-terminus: PqqA binding protein (91 aa).

This sequence belongs to the PqqD family. In terms of assembly, monomer. Interacts with PqqE.

It participates in cofactor biosynthesis; pyrroloquinoline quinone biosynthesis. Functions as a PqqA binding protein and presents PqqA to PqqE, in the pyrroloquinoline quinone (PQQ) biosynthetic pathway. The sequence is that of PqqA binding protein from Pseudomonas putida (strain W619).